Reading from the N-terminus, the 234-residue chain is 7-cyano-7-deazaguanine synthase (234 aa).

Residue 15 to 25 (LSGGLDSSTCL) participates in ATP binding. C199, C208, C211, and C214 together coordinate Zn(2+).

It belongs to the QueC family. Zn(2+) is required as a cofactor.

It catalyses the reaction 7-carboxy-7-deazaguanine + NH4(+) + ATP = 7-cyano-7-deazaguanine + ADP + phosphate + H2O + H(+). It participates in purine metabolism; 7-cyano-7-deazaguanine biosynthesis. Its function is as follows. Catalyzes the ATP-dependent conversion of 7-carboxy-7-deazaguanine (CDG) to 7-cyano-7-deazaguanine (preQ(0)). This Anaeromyxobacter dehalogenans (strain 2CP-C) protein is 7-cyano-7-deazaguanine synthase.